Consider the following 405-residue polypeptide: Aurora kinase A (405 aa).

Composition is skewed to polar residues over residues 32–82 (VPSQ…QLQA) and 91–110 (RSLN…PGNN). The tract at residues 32–127 (VPSQNPLSAN…KQKNEESKKR (96 aa)) is disordered. Ser42 and Ser52 each carry phosphoserine. A compositionally biased stretch (basic and acidic residues) spans 111–127 (SEKELATKQKNEESKKR). The region spanning 134-384 (FEIGRPLGKG…LKDVLEHPWI (251 aa)) is the Protein kinase domain. ATP contacts are provided by residues Lys144, Lys163, and 212–214 (EYA). Asp257 acts as the Proton acceptor in catalysis. Lys259 is covalently cross-linked (Glycyl lysine isopeptide (Lys-Gly) (interchain with G-Cter in SUMO2)). Residues 261-262 (EN) and Asp275 each bind ATP. An activation segment region spans residues 281–294 (HAPSSRRTTLCGTL). Residues Thr288 and Thr289 each carry the phosphothreonine modification. Phosphoserine is present on Ser343. The interval 385 to 405 (MANSSKPSSSQKSKDSTSKQS) is disordered. Basic and acidic residues predominate over residues 396 to 405 (KSKDSTSKQS).

The protein belongs to the protein kinase superfamily. Ser/Thr protein kinase family. Aurora subfamily. In terms of assembly, part of a complex composed of NEDD9, AURKA and CTTN; within the complex NEDD9 acts as a scaffold protein and is required for complex formation. Identified in a complex with AUNIP and NIN. Interacts with FBXL7. Interacts with CPEB1, JTB, TACC1, TPX2, PPP2CA, as well as with the protein phosphatase type 1 (PP1) isoforms PPP1CA, PPP1CB and PPP1CC. Also interacts with its substrates ARHGEF2, BORA, KIF2A, PARD3, and p53/TP53. Interaction with BORA promotes phosphorylation of PLK1. Interacts with CIMAP3. Interacts with GADD45A, competing with its oligomerization. Interacts (via C-terminus) with AUNIP (via C-terminus). Interacts with FRY; this interaction facilitates AURKA-mediated PLK1 phosphorylation. Interacts with SIRT2. Interacts with MYCN; interaction is phospho-independent and triggers AURKA activation; AURKA competes with FBXW7 for binding to unphosphorylated MYCN but not for binding to phosphorylated MYCN. Interacts with HNRNPU. Interacts with AAAS. Interacts with KLHL18 and CUL3. Interacts with FOXP1. Interacts with HDAC6; AURKA-mediated phosphorylation of HDAC6 promotes deacetylation of alpha-tubulin. Post-translationally, activated by phosphorylation at Thr-289; this brings about a change in the conformation of the activation segment. Phosphorylation at Thr-289 varies during the cell cycle and is highest during M phase. Autophosphorylated at Thr-289 upon TPX2 binding. Thr-289 can be phosphorylated by several kinases, including PAK and PKA. Protein phosphatase type 1 (PP1) binds AURKA and inhibits its activity by dephosphorylating Thr-289 during mitosis. Phosphorylation at Ser-343 decreases the kinase activity. PPP2CA controls degradation by dephosphorylating Ser-52 at the end of mitosis. Ubiquitinated by the E3 ubiquitin-protein ligase complex SCF(FBXL7) during mitosis, leading to its degradation by the proteasome. Ubiquitinated by CHFR, leading to its degradation by the proteasome. Ubiquitinated by the anaphase-promoting complex (APC), leading to its degradation by the proteasome. Ubiquitinated by the CUL3-KLHL18 ligase leading to its activation at the centrosome which is required for initiating mitotic entry. Ubiquitination mediated by CUL3-KLHL18 ligase does not lead to its degradation by the proteasome.

The protein resides in the cytoplasm. It is found in the cytoskeleton. It localises to the microtubule organizing center. Its subcellular location is the centrosome. The protein localises to the spindle pole. The protein resides in the centriole. It is found in the cell projection. It localises to the neuron projection. Its subcellular location is the cilium. The protein localises to the cilium basal body. The protein resides in the basolateral cell membrane. The enzyme catalyses L-seryl-[protein] + ATP = O-phospho-L-seryl-[protein] + ADP + H(+). The catalysed reaction is L-threonyl-[protein] + ATP = O-phospho-L-threonyl-[protein] + ADP + H(+). With respect to regulation, activation of CDK1, appears to be an upstream event of AURKA activation. Phosphatase inhibitor-2 (PPP1R2) and TPX2 act also as activators. Inactivated by the G2 checkpoint. Inhibited by GADD45A and p53/TP53, and through dephosphorylation by protein phosphatase type 1 (PP1). MLN8054 is also a potent and selective inhibitor. Activated during the early phase of cilia disassembly in the presence of CIMAP3. Inhibited by the small molecule inhibitor VX-680. Functionally, mitotic serine/threonine kinase that contributes to the regulation of cell cycle progression. Associates with the centrosome and the spindle microtubules during mitosis and plays a critical role in various mitotic events including the establishment of mitotic spindle, centrosome duplication, centrosome separation as well as maturation, chromosomal alignment, spindle assembly checkpoint, and cytokinesis. Required for normal spindle positioning during mitosis and for the localization of NUMA1 and DCTN1 to the cell cortex during metaphase. Required for initial activation of CDK1 at centrosomes. Phosphorylates numerous target proteins, including ARHGEF2, BORA, BRCA1, CDC25B, DLGP5, HDAC6, KIF2A, LATS2, NDEL1, PARD3, PPP1R2, PLK1, RASSF1, TACC3, p53/TP53 and TPX2. Phosphorylates MCRS1 which is required for MCRS1-mediated kinetochore fiber assembly and mitotic progression. Regulates KIF2A tubulin depolymerase activity. Important for microtubule formation and/or stabilization. Required for normal axon formation. Plays a role in microtubule remodeling during neurite extension. Also acts as a key regulatory component of the p53/TP53 pathway, and particularly the checkpoint-response pathways critical for oncogenic transformation of cells, by phosphorylating and destabilizing p53/TP53. Phosphorylates its own inhibitors, the protein phosphatase type 1 (PP1) isoforms, to inhibit their activity. Inhibits cilia outgrowth. Required for cilia disassembly via phosphorylation of HDAC6 and subsequent deacetylation of alpha-tubulin. Regulates protein levels of the anti-apoptosis protein BIRC5 by suppressing the expression of the SCF(FBXL7) E3 ubiquitin-protein ligase substrate adapter FBXL7 through the phosphorylation of the transcription factor FOXP1. The sequence is that of Aurora kinase A from Canis lupus familiaris (Dog).